Consider the following 362-residue polypeptide: RING finger protein 32 (362 aa).

The RING-type 1; atypical zinc-finger motif lies at 127-169 (CPICKEEFELRPQVLLSCSHVFHKACLQAFEKFTNKKTCPLCR). Residues 186-215 (RIKCVTRIQAYWRGCVVRKWYRNLRKTVPP) enclose the IQ domain. Residues 293–352 (CSICLAPLSAAGGQRVGAGRRSREMALLSCSHVFHHACLLALEEFSVGDRPPFHACPLCR) form an RING-type 2; atypical zinc finger.

As to expression, highly expressed in testis, less abundant in ovary.

It localises to the cytoplasm. In terms of biological role, may play a role in sperm formation. The polypeptide is RING finger protein 32 (RNF32) (Homo sapiens (Human)).